The sequence spans 607 residues: Pescadillo homolog (607 aa).

A disordered region spans residues 301-341 (ANVVEQSEKTTEDADEEPETEENLDEFKPADGADNEDSKSL). Positions 313–324 (DADEEPETEENL) are enriched in acidic residues. A compositionally biased stretch (basic and acidic residues) spans 325-339 (DEFKPADGADNEDSK). The 94-residue stretch at 348-441 (SNTSLFSNFT…ILERTDLYAC (94 aa)) folds into the BRCT domain. The stretch at 497–604 (ENVEQIDDAE…RDIEKRKKLK (108 aa)) forms a coiled coil. Residues 531-607 (QNSKSAKKTK…EKRKKLKVEN (77 aa)) are disordered. Basic and acidic residues-rich tracts occupy residues 544-561 (RDTLTAEEKEEKEAKELS) and 595-607 (RDIEKRKKLKVEN).

It belongs to the pescadillo family. Component of the NOP7 complex, composed of erb1/SPBC4F6.13c, ppp1/SPBC19F5.05c and ytm1/SPAC890.04c. Within the NOP7 complex erb1/SPBC4F6.13c appears to interact directly with ppp1/SPBC19F5.05c and ytm1/SPAC890.04c. The NOP7 complex also associates with the 66S pre-ribosome.

Its subcellular location is the nucleus. It is found in the nucleoplasm. The protein resides in the nucleolus. In terms of biological role, component of the NOP7 complex, which is required for maturation of the 25S and 5.8S ribosomal RNAs and formation of the 60S ribosome. This is Pescadillo homolog (ppp1) from Schizosaccharomyces pombe (strain 972 / ATCC 24843) (Fission yeast).